The sequence spans 333 residues: Acetyltransferase Pat (333 aa).

3',5'-cyclic AMP contacts are provided by residues 88-91, 98-99, and R138; these read GEIA and RS. The 163-residue stretch at 156-318 folds into the N-acetyltransferase domain; it reads LMLRPVLPGD…GELSLGREMV (163 aa). H173 is a substrate binding site. D214 contributes to the Mg(2+) binding site. Residues 238–240, 246–251, N277, and R286 each bind substrate; these read FTV and GRGIGS.

As to quaternary structure, homodimer. Requires Mg(2+) as cofactor.

Autoinhibited and allosterically activated by 3,5-cyclic adenosine monophosphate (cAMP). An extensive conformational rearrangement relieves this autoinhibition by means of a substrate-mimicking lid that covers the protein-substrate binding surface. Functionally, catalyzes specifically the acetylation of the epsilon-amino group of a highly conserved lysine residue in acetyl-CoA synthetase (ACS). This acetylation results in the inactivation of ACS activity and could be important for mycobacteria to adjust to environmental changes. The chain is Acetyltransferase Pat from Mycobacterium tuberculosis (strain ATCC 25618 / H37Rv).